Here is a 466-residue protein sequence, read N- to C-terminus: Soluble pyridine nucleotide transhydrogenase (466 aa).

36 to 45 (EKESSVGGGC) is an FAD binding site.

Belongs to the class-I pyridine nucleotide-disulfide oxidoreductase family. Requires FAD as cofactor.

The protein localises to the cytoplasm. It carries out the reaction NAD(+) + NADPH = NADH + NADP(+). Its function is as follows. Conversion of NADPH, generated by peripheral catabolic pathways, to NADH, which can enter the respiratory chain for energy generation. This chain is Soluble pyridine nucleotide transhydrogenase, found in Vibrio vulnificus (strain CMCP6).